The chain runs to 275 residues: Adaptin ear-binding coat-associated protein 1 (275 aa).

The segment at 170–191 (KGGASKPRTARGGGLSLLPPPP) is disordered. At Arg-180 the chain carries Omega-N-methylarginine. Thr-211 carries the post-translational modification Phosphothreonine. 2 short sequence motifs (WXXF motif) span residues 252-255 (WGDF) and 272-275 (WVQF). The interval 254 to 275 (DFSTASSSVPNQAPQPSNWVQF) is disordered. The segment covering 256–275 (STASSSVPNQAPQPSNWVQF) has biased composition (polar residues).

This sequence belongs to the NECAP family. Interacts with AP1G1 and AP2A1 components of the adapter protein complexes AP-1 and AP-2. Interacts with the GAE domain proteins GGA1, GGA2 and GGA3.

It localises to the cytoplasmic vesicle. Its subcellular location is the clathrin-coated vesicle membrane. The protein localises to the cell membrane. Functionally, involved in endocytosis. The chain is Adaptin ear-binding coat-associated protein 1 (NECAP1) from Homo sapiens (Human).